The sequence spans 251 residues: HTH-type transcriptional regulator UlaR (251 aa).

The HTH deoR-type domain maps to 3 to 58 (EAQRHQILLEMLAQLGFVTVEKVVERLGISPATARRDINKLDESGKLKKVRNGAEA). A DNA-binding region (H-T-H motif) is located at residues 20–39 (VTVEKVVERLGISPATARRD).

It localises to the cytoplasm. Functionally, represses ulaG and the ulaABCDEF operon. In Escherichia coli (strain SMS-3-5 / SECEC), this protein is HTH-type transcriptional regulator UlaR.